A 171-amino-acid polypeptide reads, in one-letter code: Endoribonuclease YbeY (171 aa).

Positions 126, 130, and 136 each coordinate Zn(2+).

The protein belongs to the endoribonuclease YbeY family. Zn(2+) is required as a cofactor.

Its subcellular location is the cytoplasm. Functionally, single strand-specific metallo-endoribonuclease involved in late-stage 70S ribosome quality control and in maturation of the 3' terminus of the 16S rRNA. The sequence is that of Endoribonuclease YbeY from Rhizobium etli (strain CIAT 652).